A 289-amino-acid polypeptide reads, in one-letter code: Ribosomal RNA small subunit methyltransferase I (289 aa).

It belongs to the methyltransferase superfamily. RsmI family.

It is found in the cytoplasm. It catalyses the reaction cytidine(1402) in 16S rRNA + S-adenosyl-L-methionine = 2'-O-methylcytidine(1402) in 16S rRNA + S-adenosyl-L-homocysteine + H(+). Functionally, catalyzes the 2'-O-methylation of the ribose of cytidine 1402 (C1402) in 16S rRNA. This Helicobacter pylori (strain J99 / ATCC 700824) (Campylobacter pylori J99) protein is Ribosomal RNA small subunit methyltransferase I.